Reading from the N-terminus, the 633-residue chain is DNA topoisomerase 4 subunit B (633 aa).

ATP contacts are provided by residues Y5, N45, D72, 113-119 (GLHGVGA), and K337. A Toprim domain is found at 419–534 (KELFIVEGDS…LGHVYLALPP (116 aa)). Residues E425, D499, and D501 each contribute to the Mg(2+) site.

It belongs to the type II topoisomerase family. ParE type 2 subfamily. In terms of assembly, heterotetramer composed of ParC and ParE. It depends on Mg(2+) as a cofactor. Mn(2+) is required as a cofactor. Ca(2+) serves as cofactor.

It carries out the reaction ATP-dependent breakage, passage and rejoining of double-stranded DNA.. In terms of biological role, topoisomerase IV is essential for chromosome segregation. It relaxes supercoiled DNA. Performs the decatenation events required during the replication of a circular DNA molecule. The polypeptide is DNA topoisomerase 4 subunit B (Mycoplasma genitalium (strain ATCC 33530 / DSM 19775 / NCTC 10195 / G37) (Mycoplasmoides genitalium)).